The sequence spans 958 residues: Translation initiation factor IF-2 (958 aa).

Residues 50–67 (FKPAAAPKVEAKPAAPKV) show a composition bias toward low complexity. Disordered stretches follow at residues 50–224 (FKPA…RIDF) and 288–374 (EVVP…HELP). Basic and acidic residues-rich tracts occupy residues 68–89 (SAEKKAEKSEPAKPAVAKEEAK), 96–118 (SAEKKAEKSEPVKPAVAKEEAKP), and 138–153 (FKAEREARAKEQAERR). Positions 157–169 (KGNNRDQQQNGNR) are enriched in low complexity. 2 stretches are compositionally biased toward basic and acidic residues: residues 185 to 195 (RDNRRFNDQAK) and 290 to 323 (VPEKKEPAVDTRRKKQARPDKNRDDYDHEEDGPR). The span at 337-346 (NQKNSNWNNN) shows a compositional bias: low complexity. The span at 365–374 (VTERKFHELP) shows a compositional bias: basic and acidic residues. Residues 460-627 (ERPPVVTIMG…TVLLVAEIQE (168 aa)) enclose the tr-type G domain. The interval 469–476 (GHVDHGKT) is G1. Residue 469-476 (GHVDHGKT) participates in GTP binding. The interval 494–498 (GITQH) is G2. The tract at residues 515–518 (DTPG) is G3. GTP-binding positions include 515-519 (DTPGH) and 569-572 (NKID). Residues 569 to 572 (NKID) are G4. The interval 605–607 (SAK) is G5.

The protein belongs to the TRAFAC class translation factor GTPase superfamily. Classic translation factor GTPase family. IF-2 subfamily.

It localises to the cytoplasm. Functionally, one of the essential components for the initiation of protein synthesis. Protects formylmethionyl-tRNA from spontaneous hydrolysis and promotes its binding to the 30S ribosomal subunits. Also involved in the hydrolysis of GTP during the formation of the 70S ribosomal complex. The protein is Translation initiation factor IF-2 of Streptococcus pneumoniae serotype 4 (strain ATCC BAA-334 / TIGR4).